Here is a 581-residue protein sequence, read N- to C-terminus: Threonine--tRNA ligase (581 aa).

A catalytic region spans residues 185–478 (DHRKLGKELD…LIEHYGGAFP (294 aa)). Positions 278, 329, and 455 each coordinate Zn(2+).

The protein belongs to the class-II aminoacyl-tRNA synthetase family. As to quaternary structure, homodimer. The cofactor is Zn(2+).

It is found in the cytoplasm. The catalysed reaction is tRNA(Thr) + L-threonine + ATP = L-threonyl-tRNA(Thr) + AMP + diphosphate + H(+). Catalyzes the attachment of threonine to tRNA(Thr) in a two-step reaction: L-threonine is first activated by ATP to form Thr-AMP and then transferred to the acceptor end of tRNA(Thr). Also edits incorrectly charged L-seryl-tRNA(Thr). In Borreliella afzelii (strain PKo) (Borrelia afzelii), this protein is Threonine--tRNA ligase.